The primary structure comprises 432 residues: C-type cytochrome OmcS (432 aa).

An N-terminal signal peptide occupies residues 1 to 25 (MKKGMKVSLSVAAAALLMSAPAAFA).

Heme serves as cofactor.

The protein resides in the cell outer membrane. It is found in the cell surface. Functionally, plays an important role in extracellular electron transfer. Can transfer electrons to insoluble Fe(3+) oxides as well as other extracellular electron acceptors, including Mn(4+) oxide and humic substances. Essential for direct interspecies electron transfer (DIET) in cocultures with G.metallireducens. In Geobacter sulfurreducens (strain ATCC 51573 / DSM 12127 / PCA), this protein is C-type cytochrome OmcS.